Here is a 223-residue protein sequence, read N- to C-terminus: uncharacterized protein (223 aa).

The next 7 helical transmembrane spans lie at 25 to 45 (TYFL…ATMA), 46 to 66 (IGIS…ILFF), 78 to 98 (LVWT…MLNF), 105 to 125 (GPIV…GLSA), 140 to 160 (FLFA…FVGS), 161 to 181 (TVAH…FILF), and 199 to 219 (ISMY…LGIM).

Belongs to the BI1 family.

The protein localises to the cell membrane. This is an uncharacterized protein from Vibrio cholerae serotype O1 (strain ATCC 39315 / El Tor Inaba N16961).